The sequence spans 176 residues: Flavodoxin (176 aa).

Positions 4 to 172 (IGIFFGTDTG…RLASWLEEIK (169 aa)) constitute a Flavodoxin-like domain.

It belongs to the flavodoxin family. It depends on FMN as a cofactor.

Functionally, low-potential electron donor to a number of redox enzymes. NifF is the electron donor to nitrogenase. This is Flavodoxin (nifF) from Klebsiella pneumoniae.